We begin with the raw amino-acid sequence, 312 residues long: Methionyl-tRNA formyltransferase (312 aa).

111 to 114 (SLLP) serves as a coordination point for (6S)-5,6,7,8-tetrahydrofolate.

This sequence belongs to the Fmt family.

The catalysed reaction is L-methionyl-tRNA(fMet) + (6R)-10-formyltetrahydrofolate = N-formyl-L-methionyl-tRNA(fMet) + (6S)-5,6,7,8-tetrahydrofolate + H(+). Attaches a formyl group to the free amino group of methionyl-tRNA(fMet). The formyl group appears to play a dual role in the initiator identity of N-formylmethionyl-tRNA by promoting its recognition by IF2 and preventing the misappropriation of this tRNA by the elongation apparatus. This chain is Methionyl-tRNA formyltransferase, found in Rhodopseudomonas palustris (strain HaA2).